Consider the following 127-residue polypeptide: Small ribosomal subunit protein uS11 (127 aa).

Belongs to the universal ribosomal protein uS11 family. As to quaternary structure, part of the 30S ribosomal subunit. Interacts with proteins S7 and S18. Binds to IF-3.

In terms of biological role, located on the platform of the 30S subunit, it bridges several disparate RNA helices of the 16S rRNA. Forms part of the Shine-Dalgarno cleft in the 70S ribosome. This Chlorobium phaeobacteroides (strain BS1) protein is Small ribosomal subunit protein uS11.